Reading from the N-terminus, the 85-residue chain is Putative membrane protein insertion efficiency factor (85 aa).

Belongs to the UPF0161 family.

Its subcellular location is the cell membrane. In terms of biological role, could be involved in insertion of integral membrane proteins into the membrane. The chain is Putative membrane protein insertion efficiency factor from Buchnera aphidicola subsp. Baizongia pistaciae (strain Bp).